A 295-amino-acid polypeptide reads, in one-letter code: Glutamyl-Q tRNA(Asp) synthetase (295 aa).

Residues 9–13 (RFAPT) and Glu-45 contribute to the L-glutamate site. The 'HIGH' region motif lies at 12–22 (PTPSGYLHFGS). 4 residues coordinate Zn(2+): Cys-101, Cys-103, Tyr-115, and Cys-119. L-glutamate-binding residues include Tyr-172 and Arg-190. Residues 228 to 232 (KLGKS) carry the 'KMSKS' region motif. Residue Lys-231 coordinates ATP.

This sequence belongs to the class-I aminoacyl-tRNA synthetase family. GluQ subfamily. The cofactor is Zn(2+).

Functionally, catalyzes the tRNA-independent activation of glutamate in presence of ATP and the subsequent transfer of glutamate onto a tRNA(Asp). Glutamate is transferred on the 2-amino-5-(4,5-dihydroxy-2-cyclopenten-1-yl) moiety of the queuosine in the wobble position of the QUC anticodon. This is Glutamyl-Q tRNA(Asp) synthetase from Pseudomonas syringae pv. tomato (strain ATCC BAA-871 / DC3000).